The primary structure comprises 364 residues: tRNA-specific 2-thiouridylase MnmA 1 (364 aa).

ATP is bound by residues 10-17 (GMSGGVDS) and Met-36. Residue Cys-106 is the Nucleophile of the active site. The cysteines at positions 106 and 204 are disulfide-linked. Gly-130 contributes to the ATP binding site. Residues 154–156 (KDQ) are interaction with tRNA. Catalysis depends on Cys-204, which acts as the Cysteine persulfide intermediate. The interaction with tRNA stretch occupies residues 310-311 (RY).

Belongs to the MnmA/TRMU family.

It localises to the cytoplasm. It carries out the reaction S-sulfanyl-L-cysteinyl-[protein] + uridine(34) in tRNA + AH2 + ATP = 2-thiouridine(34) in tRNA + L-cysteinyl-[protein] + A + AMP + diphosphate + H(+). Its function is as follows. Catalyzes the 2-thiolation of uridine at the wobble position (U34) of tRNA, leading to the formation of s(2)U34. The sequence is that of tRNA-specific 2-thiouridylase MnmA 1 from Thermoanaerobacter pseudethanolicus (strain ATCC 33223 / 39E) (Clostridium thermohydrosulfuricum).